Consider the following 189-residue polypeptide: Elongation factor P (189 aa).

This sequence belongs to the elongation factor P family.

Its subcellular location is the cytoplasm. It participates in protein biosynthesis; polypeptide chain elongation. In terms of biological role, involved in peptide bond synthesis. Stimulates efficient translation and peptide-bond synthesis on native or reconstituted 70S ribosomes in vitro. Probably functions indirectly by altering the affinity of the ribosome for aminoacyl-tRNA, thus increasing their reactivity as acceptors for peptidyl transferase. In Phytoplasma australiense, this protein is Elongation factor P.